Here is a 212-residue protein sequence, read N- to C-terminus: Glycerol-3-phosphate acyltransferase (212 aa).

6 consecutive transmembrane segments (helical) span residues 6-26, 56-76, 92-112, 122-142, 150-170, and 171-191; these read IAVL…GLIL, LAAL…LLAH, LTLI…WLGF, LGVS…AWLL, SSVG…FMPA, and SHEI…LLLW.

The protein belongs to the PlsY family. Probably interacts with PlsX.

The protein resides in the cell inner membrane. The catalysed reaction is an acyl phosphate + sn-glycerol 3-phosphate = a 1-acyl-sn-glycero-3-phosphate + phosphate. It functions in the pathway lipid metabolism; phospholipid metabolism. Functionally, catalyzes the transfer of an acyl group from acyl-phosphate (acyl-PO(4)) to glycerol-3-phosphate (G3P) to form lysophosphatidic acid (LPA). This enzyme utilizes acyl-phosphate as fatty acyl donor, but not acyl-CoA or acyl-ACP. The polypeptide is Glycerol-3-phosphate acyltransferase (Zymomonas mobilis subsp. mobilis (strain ATCC 31821 / ZM4 / CP4)).